An 81-amino-acid chain; its full sequence is Acyl carrier protein (81 aa).

The Carrier domain maps to 2–80 (SKVDNIEQKV…DVVNYIKEHK (79 aa)). The residue at position 40 (Ser40) is an O-(pantetheine 4'-phosphoryl)serine.

This sequence belongs to the acyl carrier protein (ACP) family. In terms of processing, 4'-phosphopantetheine is transferred from CoA to a specific serine of apo-ACP by AcpS. This modification is essential for activity because fatty acids are bound in thioester linkage to the sulfhydryl of the prosthetic group.

It localises to the cytoplasm. It functions in the pathway lipid metabolism; fatty acid biosynthesis. Carrier of the growing fatty acid chain in fatty acid biosynthesis. The polypeptide is Acyl carrier protein (Rickettsia bellii (strain OSU 85-389)).